A 1630-amino-acid chain; its full sequence is Histone transcription regulator 3 homolog (1630 aa).

A TPR 1 repeat occupies 8–42 (NAASEDLDKEKRTLEIRIEEAVQIYQNALSAQKQG). The interval 325 to 347 (KDIVPPPSDNLPKPQLLKRPIDD) is disordered. The TPR 2 repeat unit spans residues 1230 to 1263 (WRALYMLGKACRKCGDMENALVHFEAAAALAPTK).

Belongs to the HIR3 family. As to quaternary structure, interacts with hip1 and slm9.

It localises to the nucleus. Has a role in a nucleosome assembly pathway that is required for the integrity of heterochromatin and proper chromosome segregation. Required for transcriptional silencing in the outer repeat (otr) region of centromeric repeats and the Tf2 long terminal repeat retrotransposons. The sequence is that of Histone transcription regulator 3 homolog (hip3) from Schizosaccharomyces pombe (strain 972 / ATCC 24843) (Fission yeast).